The following is a 271-amino-acid chain: Formamidopyrimidine-DNA glycosylase (271 aa).

Pro2 acts as the Schiff-base intermediate with DNA in catalysis. Catalysis depends on Glu3, which acts as the Proton donor. Lys57 acts as the Proton donor; for beta-elimination activity in catalysis. DNA-binding residues include His90, Arg109, and Lys151. The FPG-type zinc finger occupies 236–270 (HVYGRGGKTCTQCGHMLSEIKLGQRATVFCSLCQQ). Residue Arg260 is the Proton donor; for delta-elimination activity of the active site.

It belongs to the FPG family. In terms of assembly, monomer. The cofactor is Zn(2+).

It catalyses the reaction Hydrolysis of DNA containing ring-opened 7-methylguanine residues, releasing 2,6-diamino-4-hydroxy-5-(N-methyl)formamidopyrimidine.. It carries out the reaction 2'-deoxyribonucleotide-(2'-deoxyribose 5'-phosphate)-2'-deoxyribonucleotide-DNA = a 3'-end 2'-deoxyribonucleotide-(2,3-dehydro-2,3-deoxyribose 5'-phosphate)-DNA + a 5'-end 5'-phospho-2'-deoxyribonucleoside-DNA + H(+). Functionally, involved in base excision repair of DNA damaged by oxidation or by mutagenic agents. Acts as a DNA glycosylase that recognizes and removes damaged bases. Has a preference for oxidized purines, such as 7,8-dihydro-8-oxoguanine (8-oxoG). Has AP (apurinic/apyrimidinic) lyase activity and introduces nicks in the DNA strand. Cleaves the DNA backbone by beta-delta elimination to generate a single-strand break at the site of the removed base with both 3'- and 5'-phosphates. In Shewanella pealeana (strain ATCC 700345 / ANG-SQ1), this protein is Formamidopyrimidine-DNA glycosylase.